The sequence spans 449 residues: Jacalin-related lectin 20 (449 aa).

2 disordered regions span residues 1-20 (MAQR…DDGA) and 294-314 (APPI…GDGG). At A2 the chain carries N-acetylalanine. Jacalin-type lectin domains lie at 2 to 144 (AQRL…YFTP), 147 to 294 (PIKQ…HFGA), and 303 to 446 (TEKL…TVAP).

The protein belongs to the jacalin lectin family.

This Arabidopsis thaliana (Mouse-ear cress) protein is Jacalin-related lectin 20 (JAL20).